The chain runs to 637 residues: MLEQIRGPADLQHLSQAQLEDLAHEIRDFLIHKVAATGGHLGPNLGVVELTLALHRVFDSPHDPILFDTGHQAYVHKMLTGRCRDFDSLRKKDGLSGYPSSAESEHDWIESSHASSALSYADGLAKAFELSGHRNRHVVAVVGDGALTGGMCWEALNNIAASRRPVVIVVNDNGRSYAPTIGGFAEHLAGLRLQPGYERVLEEGRKAVRGVPMIGEFCYQCMHSIKVGIKDALSPQVMFTDLGLKYVGPIDGHDEHAVESALRHARAFNAPVVVHVVTRKGMGYAPAENDADDQMHACGVIDPETGLATSVPGPGWTSTFSEALIRLAGKRRDIVAITAAMPGPTGLSAFRDRFPDRFFDVGIAEQHAMTSAAGLAMGGMHPVVAIYSTFLNRAFDQMLMDVALHKLPVTVVLDRSGVTGPDGASHNGMWDLSILGIVPGMRVAAPRDGARLREELGEALDVSDGPTAIRFPKGDVGEDIPAIERRGDVDVLAVPADGMSEDVLLVAVGPFAAMALAVADRLRNQGIGVTVVDPRWVLPVPEEIATLATRHKLVVTLEDNGGHGGVGSAVSGALRHKEIDVPCRDAALPQEFFAHASRGEVLESVGLTERNIARQITGWVAALGASTGDREVSEHVD.

Thiamine diphosphate contacts are provided by residues His-71 and 112-114; that span reads SHA. Asp-144 provides a ligand contact to Mg(2+). Residues 145 to 146, Asn-173, Tyr-284, and Glu-365 each bind thiamine diphosphate; that span reads GA. Asn-173 provides a ligand contact to Mg(2+).

The protein belongs to the transketolase family. DXPS subfamily. In terms of assembly, homodimer. Requires Mg(2+) as cofactor. Thiamine diphosphate is required as a cofactor.

It catalyses the reaction D-glyceraldehyde 3-phosphate + pyruvate + H(+) = 1-deoxy-D-xylulose 5-phosphate + CO2. It functions in the pathway metabolic intermediate biosynthesis; 1-deoxy-D-xylulose 5-phosphate biosynthesis; 1-deoxy-D-xylulose 5-phosphate from D-glyceraldehyde 3-phosphate and pyruvate: step 1/1. Its function is as follows. Catalyzes the acyloin condensation reaction between C atoms 2 and 3 of pyruvate and glyceraldehyde 3-phosphate to yield 1-deoxy-D-xylulose-5-phosphate (DXP). In Mycolicibacterium vanbaalenii (strain DSM 7251 / JCM 13017 / BCRC 16820 / KCTC 9966 / NRRL B-24157 / PYR-1) (Mycobacterium vanbaalenii), this protein is 1-deoxy-D-xylulose-5-phosphate synthase.